Reading from the N-terminus, the 168-residue chain is Sperm acrosome-associated protein 9 (168 aa).

Microtubule inner protein component of sperm flagellar doublet microtubules. Interacts with CABP1 and CALR. Interacts with INCA1. Interacts with microtubules. As to expression, testis-specific. Expressed in round spermatids.

It localises to the cytoplasm. It is found in the cytoplasmic vesicle. The protein resides in the secretory vesicle. Its subcellular location is the acrosome. The protein localises to the cytoskeleton. It localises to the cilium basal body. It is found in the flagellum axoneme. The protein resides in the cilium axoneme. Its subcellular location is the nucleus. In terms of biological role, microtubule inner protein (MIP) part of the dynein-decorated doublet microtubules (DMTs) of multiciliated respiratory cells and the distal singlet microtubules of monoflagellated spermatozoa. Forms an extensive interaction network cross-linking the lumen of axonemal doublet microtubules. The chain is Sperm acrosome-associated protein 9 (Spaca9) from Rattus norvegicus (Rat).